Here is a 212-residue protein sequence, read N- to C-terminus: Probable GTP-binding protein EngB (212 aa).

Residues 38–210 (SLPEIAFVGK…KASLAKCIKF (173 aa)) form the EngB-type G domain. Residues 46 to 53 (GKSNVGKS), 73 to 77 (GRTRQ), 91 to 94 (DLPG), 158 to 161 (TKSD), and 189 to 191 (VSN) contribute to the GTP site. Mg(2+)-binding residues include serine 53 and threonine 75.

Belongs to the TRAFAC class TrmE-Era-EngA-EngB-Septin-like GTPase superfamily. EngB GTPase family. Mg(2+) is required as a cofactor.

Necessary for normal cell division and for the maintenance of normal septation. The protein is Probable GTP-binding protein EngB of Rickettsia rickettsii (strain Sheila Smith).